We begin with the raw amino-acid sequence, 425 residues long: Formyl-CoA:oxalate CoA-transferase (425 aa).

Residues 17-18, Arg38, 72-75, 96-98, Arg104, and 136-139 each bind CoA; these read QS, LDTK, NFG, and KVYE. Residue Asp168 is the Nucleophile of the active site. Residue 247-249 coordinates substrate; that stretch reads GGQ.

Belongs to the CoA-transferase III family. Frc subfamily. Homodimer.

It carries out the reaction formyl-CoA + oxalate = oxalyl-CoA + formate. It participates in metabolic intermediate degradation; oxalate degradation; CO(2) and formate from oxalate: step 1/2. In terms of biological role, involved in the catabolism of oxalate and in the adapatation to low pH via the induction of the oxalate-dependent acid tolerance response (ATR). Catalyzes the transfer of the CoA moiety from formyl-CoA to oxalate. The polypeptide is Formyl-CoA:oxalate CoA-transferase (Rhodopseudomonas palustris (strain ATCC BAA-98 / CGA009)).